A 182-amino-acid chain; its full sequence is uncharacterized protein (182 aa).

BNR repeat units lie at residues 58-69 and 102-113; these read WISFDAGENWET and YITDDRGESWRA.

This is an uncharacterized protein from Saccharomyces cerevisiae (strain ATCC 204508 / S288c) (Baker's yeast).